The chain runs to 390 residues: Chalcone synthase (390 aa).

Cys164 is a catalytic residue.

This sequence belongs to the thiolase-like superfamily. Chalcone/stilbene synthases family.

It carries out the reaction (E)-4-coumaroyl-CoA + 3 malonyl-CoA + 3 H(+) = 2',4,4',6'-tetrahydroxychalcone + 3 CO2 + 4 CoA. It functions in the pathway secondary metabolite biosynthesis; flavonoid biosynthesis. The primary product of this enzyme is 4,2',4',6'-tetrahydroxychalcone (also termed naringenin-chalcone or chalcone) which can under specific conditions spontaneously isomerize into naringenin. This is Chalcone synthase (CHS) from Antirrhinum majus (Garden snapdragon).